The primary structure comprises 1650 residues: Phosphatidylinositol 3,4,5-trisphosphate-dependent Rac exchanger 1 protein (1650 aa).

Residues 1-19 (MEAPGSGGGDGGGDPGGDG) show a composition bias toward gly residues. Residues 1–33 (MEAPGSGGGDGGGDPGGDGAHPDARGPVSGPCA) are disordered. The 192-residue stretch at 44–235 (LRLCVLNEIL…KTVCSNINET (192 aa)) folds into the DH domain. A PH domain is found at 266 to 387 (ELLLQGNLLK…WLDALIRERE (122 aa)). Ser314 carries the post-translational modification Phosphoserine. DEP domains are found at residues 416–491 (MSKK…RFRY) and 518–592 (SLYA…RFHA). In terms of domain architecture, PDZ spans 620-698 (RLLIPPQEDD…SRRPLRLLVA (79 aa)). Residues 793–813 (ARASQGAPDEDPQEDDQPDSA) form a disordered region. Acidic residues predominate over residues 800-810 (PDEDPQEDDQP). A Phosphoserine modification is found at Ser991. Disordered stretches follow at residues 1022 to 1047 (SPAV…GAPS) and 1099 to 1129 (PTSA…EVDR). Residues 1030–1047 (QGQGLNDSSYGSASGAPS) show a composition bias toward polar residues. Positions 1109 to 1122 (PSLVEETSSSPPVS) are enriched in low complexity. Ser1186 and Ser1191 each carry phosphoserine.

Interacts preferentially with RAC2. Interacts with RAC1. Interacts with AUTS2.

The protein resides in the cytoplasm. It is found in the cytosol. The protein localises to the cell membrane. Functionally, functions as a RAC guanine nucleotide exchange factor (GEF), which activates the Rac proteins by exchanging bound GDP for free GTP. Its activity is synergistically activated by phosphatidylinositol 3,4,5-trisphosphate and the beta gamma subunits of heterotrimeric G protein. May function downstream of heterotrimeric G proteins in neutrophils. This Mus musculus (Mouse) protein is Phosphatidylinositol 3,4,5-trisphosphate-dependent Rac exchanger 1 protein (Prex1).